A 404-amino-acid polypeptide reads, in one-letter code: Tryptophan synthase beta chain (404 aa).

K98 is modified (N6-(pyridoxal phosphate)lysine).

This sequence belongs to the TrpB family. In terms of assembly, tetramer of two alpha and two beta chains. It depends on pyridoxal 5'-phosphate as a cofactor.

The enzyme catalyses (1S,2R)-1-C-(indol-3-yl)glycerol 3-phosphate + L-serine = D-glyceraldehyde 3-phosphate + L-tryptophan + H2O. It functions in the pathway amino-acid biosynthesis; L-tryptophan biosynthesis; L-tryptophan from chorismate: step 5/5. Its function is as follows. The beta subunit is responsible for the synthesis of L-tryptophan from indole and L-serine. The chain is Tryptophan synthase beta chain from Acidiphilium cryptum (strain JF-5).